The primary structure comprises 116 residues: Large ribosomal subunit protein bL19 (116 aa).

Belongs to the bacterial ribosomal protein bL19 family.

This protein is located at the 30S-50S ribosomal subunit interface and may play a role in the structure and function of the aminoacyl-tRNA binding site. The sequence is that of Large ribosomal subunit protein bL19 from Mannheimia succiniciproducens (strain KCTC 0769BP / MBEL55E).